The sequence spans 233 residues: Lipoprotein-releasing system ATP-binding protein LolD (233 aa).

The ABC transporter domain maps to 6-233 (LQCDNLCKRY…TAELSLMGAE (228 aa)). 42 to 49 (GSSGSGKS) contacts ATP.

Belongs to the ABC transporter superfamily. Lipoprotein translocase (TC 3.A.1.125) family. As to quaternary structure, the complex is composed of two ATP-binding proteins (LolD) and two transmembrane proteins (LolC and LolE).

The protein resides in the cell inner membrane. In terms of biological role, part of the ABC transporter complex LolCDE involved in the translocation of mature outer membrane-directed lipoproteins, from the inner membrane to the periplasmic chaperone, LolA. Responsible for the formation of the LolA-lipoprotein complex in an ATP-dependent manner. This is Lipoprotein-releasing system ATP-binding protein LolD from Salmonella choleraesuis (strain SC-B67).